The sequence spans 453 residues: Bifunctional protein GlmU (453 aa).

The segment at 1–226 is pyrophosphorylase; the sequence is MAFSVVILAA…EIEVEGINNR (226 aa). UDP-N-acetyl-alpha-D-glucosamine is bound by residues 8 to 11, lysine 22, glutamine 73, and 78 to 79; these read LAAG and GT. Residue aspartate 102 coordinates Mg(2+). Glycine 137, glutamate 151, asparagine 166, and asparagine 224 together coordinate UDP-N-acetyl-alpha-D-glucosamine. Asparagine 224 is a binding site for Mg(2+). The interval 227 to 247 is linker; that stretch reads KQLAAIERAFQFEQAQELMMQ. An N-acetyltransferase region spans residues 248–453; that stretch reads GVSLLDPHRF…SGWQRPTKPE (206 aa). UDP-N-acetyl-alpha-D-glucosamine-binding residues include arginine 330 and lysine 348. Histidine 360 (proton acceptor) is an active-site residue. Residues tyrosine 363 and asparagine 374 each contribute to the UDP-N-acetyl-alpha-D-glucosamine site. Residues alanine 377, 383–384, serine 402, alanine 420, and arginine 437 each bind acetyl-CoA; that span reads NY.

In the N-terminal section; belongs to the N-acetylglucosamine-1-phosphate uridyltransferase family. The protein in the C-terminal section; belongs to the transferase hexapeptide repeat family. In terms of assembly, homotrimer. Requires Mg(2+) as cofactor.

The protein localises to the cytoplasm. The enzyme catalyses alpha-D-glucosamine 1-phosphate + acetyl-CoA = N-acetyl-alpha-D-glucosamine 1-phosphate + CoA + H(+). The catalysed reaction is N-acetyl-alpha-D-glucosamine 1-phosphate + UTP + H(+) = UDP-N-acetyl-alpha-D-glucosamine + diphosphate. It participates in nucleotide-sugar biosynthesis; UDP-N-acetyl-alpha-D-glucosamine biosynthesis; N-acetyl-alpha-D-glucosamine 1-phosphate from alpha-D-glucosamine 6-phosphate (route II): step 2/2. It functions in the pathway nucleotide-sugar biosynthesis; UDP-N-acetyl-alpha-D-glucosamine biosynthesis; UDP-N-acetyl-alpha-D-glucosamine from N-acetyl-alpha-D-glucosamine 1-phosphate: step 1/1. The protein operates within bacterial outer membrane biogenesis; LPS lipid A biosynthesis. Functionally, catalyzes the last two sequential reactions in the de novo biosynthetic pathway for UDP-N-acetylglucosamine (UDP-GlcNAc). The C-terminal domain catalyzes the transfer of acetyl group from acetyl coenzyme A to glucosamine-1-phosphate (GlcN-1-P) to produce N-acetylglucosamine-1-phosphate (GlcNAc-1-P), which is converted into UDP-GlcNAc by the transfer of uridine 5-monophosphate (from uridine 5-triphosphate), a reaction catalyzed by the N-terminal domain. In Pseudoalteromonas atlantica (strain T6c / ATCC BAA-1087), this protein is Bifunctional protein GlmU.